Reading from the N-terminus, the 122-residue chain is Large ribosomal subunit protein uL14 (122 aa).

This sequence belongs to the universal ribosomal protein uL14 family. Part of the 50S ribosomal subunit. Forms a cluster with proteins L3 and L19. In the 70S ribosome, L14 and L19 interact and together make contacts with the 16S rRNA in bridges B5 and B8.

Binds to 23S rRNA. Forms part of two intersubunit bridges in the 70S ribosome. The sequence is that of Large ribosomal subunit protein uL14 from Psychrobacter sp. (strain PRwf-1).